The chain runs to 374 residues: Probable aminopeptidase YDR415C (374 aa).

Residues 1 to 18 (MRIQSLFVLFNVAIIAWS) form the signal peptide. Histidine 177, aspartate 196, glutamate 235, aspartate 262, and histidine 340 together coordinate Zn(2+).

It belongs to the peptidase M28 family. M28E subfamily. The cofactor is Zn(2+).

The protein is Probable aminopeptidase YDR415C of Saccharomyces cerevisiae (strain ATCC 204508 / S288c) (Baker's yeast).